The following is a 336-amino-acid chain: Holliday junction branch migration complex subunit RuvB (336 aa).

The segment at 1–185 (MSIIVERLLS…FGVLSRVEYY (185 aa)) is large ATPase domain (RuvB-L). ATP contacts are provided by residues leucine 24, arginine 25, glycine 66, lysine 69, threonine 70, threonine 71, 132–134 (EDF), arginine 175, tyrosine 185, and arginine 222. Position 70 (threonine 70) interacts with Mg(2+). A small ATPAse domain (RuvB-S) region spans residues 186–256 (TVDQLSAIVE…ITQMALELLQ (71 aa)). The interval 259–336 (KLGLDHIDHK…EHFGMEIPKV (78 aa)) is head domain (RuvB-H). Residues arginine 314 and arginine 319 each contribute to the DNA site.

This sequence belongs to the RuvB family. In terms of assembly, homohexamer. Forms an RuvA(8)-RuvB(12)-Holliday junction (HJ) complex. HJ DNA is sandwiched between 2 RuvA tetramers; dsDNA enters through RuvA and exits via RuvB. An RuvB hexamer assembles on each DNA strand where it exits the tetramer. Each RuvB hexamer is contacted by two RuvA subunits (via domain III) on 2 adjacent RuvB subunits; this complex drives branch migration. In the full resolvosome a probable DNA-RuvA(4)-RuvB(12)-RuvC(2) complex forms which resolves the HJ.

It is found in the cytoplasm. It catalyses the reaction ATP + H2O = ADP + phosphate + H(+). Functionally, the RuvA-RuvB-RuvC complex processes Holliday junction (HJ) DNA during genetic recombination and DNA repair, while the RuvA-RuvB complex plays an important role in the rescue of blocked DNA replication forks via replication fork reversal (RFR). RuvA specifically binds to HJ cruciform DNA, conferring on it an open structure. The RuvB hexamer acts as an ATP-dependent pump, pulling dsDNA into and through the RuvAB complex. RuvB forms 2 homohexamers on either side of HJ DNA bound by 1 or 2 RuvA tetramers; 4 subunits per hexamer contact DNA at a time. Coordinated motions by a converter formed by DNA-disengaged RuvB subunits stimulates ATP hydrolysis and nucleotide exchange. Immobilization of the converter enables RuvB to convert the ATP-contained energy into a lever motion, pulling 2 nucleotides of DNA out of the RuvA tetramer per ATP hydrolyzed, thus driving DNA branch migration. The RuvB motors rotate together with the DNA substrate, which together with the progressing nucleotide cycle form the mechanistic basis for DNA recombination by continuous HJ branch migration. Branch migration allows RuvC to scan DNA until it finds its consensus sequence, where it cleaves and resolves cruciform DNA. This Bacillus cereus (strain ATCC 14579 / DSM 31 / CCUG 7414 / JCM 2152 / NBRC 15305 / NCIMB 9373 / NCTC 2599 / NRRL B-3711) protein is Holliday junction branch migration complex subunit RuvB.